A 689-amino-acid polypeptide reads, in one-letter code: Glycine--tRNA ligase beta subunit (689 aa).

The protein belongs to the class-II aminoacyl-tRNA synthetase family. As to quaternary structure, tetramer of two alpha and two beta subunits.

Its subcellular location is the cytoplasm. The enzyme catalyses tRNA(Gly) + glycine + ATP = glycyl-tRNA(Gly) + AMP + diphosphate. The chain is Glycine--tRNA ligase beta subunit from Escherichia coli O139:H28 (strain E24377A / ETEC).